We begin with the raw amino-acid sequence, 421 residues long: Gamma-glutamyl phosphate reductase (421 aa).

The protein belongs to the gamma-glutamyl phosphate reductase family.

Its subcellular location is the cytoplasm. The enzyme catalyses L-glutamate 5-semialdehyde + phosphate + NADP(+) = L-glutamyl 5-phosphate + NADPH + H(+). Its pathway is amino-acid biosynthesis; L-proline biosynthesis; L-glutamate 5-semialdehyde from L-glutamate: step 2/2. Catalyzes the NADPH-dependent reduction of L-glutamate 5-phosphate into L-glutamate 5-semialdehyde and phosphate. The product spontaneously undergoes cyclization to form 1-pyrroline-5-carboxylate. This Bordetella petrii (strain ATCC BAA-461 / DSM 12804 / CCUG 43448) protein is Gamma-glutamyl phosphate reductase.